The sequence spans 277 residues: Phosphatidylglycerol--prolipoprotein diacylglyceryl transferase (277 aa).

4 helical membrane-spanning segments follow: residues 18–38 (ISVK…LLLA), 51–71 (IIVD…RIYY), 89–109 (IWHG…TAII), and 116–136 (ISFW…QAIG). Arginine 137 serves as a coordination point for a 1,2-diacyl-sn-glycero-3-phospho-(1'-sn-glycerol). 3 consecutive transmembrane segments (helical) span residues 177 to 197 (QPTF…LLII), 205 to 225 (GELF…IEGM), and 235 to 255 (FRVS…IIIY).

The protein belongs to the Lgt family.

The protein localises to the cell membrane. The enzyme catalyses L-cysteinyl-[prolipoprotein] + a 1,2-diacyl-sn-glycero-3-phospho-(1'-sn-glycerol) = an S-1,2-diacyl-sn-glyceryl-L-cysteinyl-[prolipoprotein] + sn-glycerol 1-phosphate + H(+). The protein operates within protein modification; lipoprotein biosynthesis (diacylglyceryl transfer). In terms of biological role, catalyzes the transfer of the diacylglyceryl group from phosphatidylglycerol to the sulfhydryl group of the N-terminal cysteine of a prolipoprotein, the first step in the formation of mature lipoproteins. The sequence is that of Phosphatidylglycerol--prolipoprotein diacylglyceryl transferase from Listeria monocytogenes serotype 4b (strain CLIP80459).